We begin with the raw amino-acid sequence, 156 residues long: Small ribosomal subunit protein uS7 (156 aa).

The protein belongs to the universal ribosomal protein uS7 family. As to quaternary structure, part of the 30S ribosomal subunit. Contacts proteins S9 and S11.

One of the primary rRNA binding proteins, it binds directly to 16S rRNA where it nucleates assembly of the head domain of the 30S subunit. Is located at the subunit interface close to the decoding center, probably blocks exit of the E-site tRNA. This Shigella dysenteriae serotype 1 (strain Sd197) protein is Small ribosomal subunit protein uS7.